The chain runs to 602 residues: Alpha-glucosides permease MPH3 (602 aa).

The Cytoplasmic portion of the chain corresponds to 1-106; the sequence is MKNLSFLINR…AAAWSLLVST (106 aa). The chain crosses the membrane as a helical span at residues 107 to 127; the sequence is TLIMEGYDTAILGAFYALPIF. Residues 128–142 lie on the Extracellular side of the membrane; it reads QRKFGSQNDKTGEWE. A helical transmembrane segment spans residues 143 to 163; that stretch reads ISASWQIGLTLCYMAGEIVGL. Residues 164-178 are Cytoplasmic-facing; it reads QLTGPSVDLVGNRYT. A helical membrane pass occupies residues 179 to 199; it reads LIIALFFLAAFTFILYFCNSL. Position 200 (glycine 200) is a topological domain, extracellular. The chain crosses the membrane as a helical span at residues 201–221; that stretch reads MIAVGQALCGMPWGCFQCLTV. Residues 222–234 are Cytoplasmic-facing; sequence SYASEICPLALRY. A helical transmembrane segment spans residues 235-255; it reads YLTTYSNLCWLFGQLFAAGIM. Residues 256–270 lie on the Extracellular side of the membrane; sequence KNSQKKYADSELGYK. The chain crosses the membrane as a helical span at residues 271 to 291; it reads LPFALQWILPVPLALGIFFAP. Residues 292–363 are Cytoplasmic-facing; it reads ESPWWLVKKG…EDKINRRRTR (72 aa). Residues 364–384 form a helical membrane-spanning segment; sequence ITCLCWAGQATCGSILIGYST. The Extracellular portion of the chain corresponds to 385 to 397; it reads YFYEKAGVSTEMS. Residues 398–418 traverse the membrane as a helical segment; it reads FTFSIIQYCLGICATFLSWWA. Residues 419 to 426 are Cytoplasmic-facing; it reads SKYFGRYD. A helical transmembrane segment spans residues 427-447; the sequence is LYAFGLAFQTIVFFIIGGLGC. Topologically, residues 448–459 are extracellular; it reads SSTHGSKMGSGS. Residues 460-480 traverse the membrane as a helical segment; that stretch reads LLMAVAFFYNLGIAPVVFCLV. The Cytoplasmic portion of the chain corresponds to 481 to 492; the sequence is SEMPSSRLRTKT. A helical membrane pass occupies residues 493 to 513; the sequence is IILARNTYNVVSIICSVLILY. Residues 514-525 are Extracellular-facing; the sequence is QLNSKKWNWGAK. A helical transmembrane segment spans residues 526–546; sequence SGFFWGVLCFCTLIWAVVDLP. Residues 547–602 lie on the Cytoplasmic side of the membrane; it reads ETAGKTFVEINELFKLGVSARKFKSTKVDPFVVKNTPKYVSHNDPKGDIEASIAEE.

This sequence belongs to the major facilitator superfamily. Sugar transporter (TC 2.A.1.1) family.

Its subcellular location is the cell membrane. Functionally, high-affinity uptake of maltose and maltotriose. Also transports alpha-methylglucoside, glucose and turanose but not melezitose or trehalose. This is Alpha-glucosides permease MPH3 (MPH3) from Saccharomyces cerevisiae (strain YJM789) (Baker's yeast).